We begin with the raw amino-acid sequence, 505 residues long: Glutamate--tRNA ligase (505 aa).

A 'HIGH' region motif is present at residues Pro-16–Thr-26. Residues Lys-257–Arg-261 carry the 'KMSKS' region motif. Lys-260 is a binding site for ATP.

This sequence belongs to the class-I aminoacyl-tRNA synthetase family. Glutamate--tRNA ligase type 1 subfamily. In terms of assembly, monomer.

Its subcellular location is the cytoplasm. The catalysed reaction is tRNA(Glu) + L-glutamate + ATP = L-glutamyl-tRNA(Glu) + AMP + diphosphate. Catalyzes the attachment of glutamate to tRNA(Glu) in a two-step reaction: glutamate is first activated by ATP to form Glu-AMP and then transferred to the acceptor end of tRNA(Glu). This chain is Glutamate--tRNA ligase, found in Psychrobacter sp. (strain PRwf-1).